We begin with the raw amino-acid sequence, 888 residues long: ETO1-like protein 1 (888 aa).

Positions 180 to 280 (KNVVFKIGEE…ACDRELASLI (101 aa)) constitute a BTB domain. 5 TPR repeats span residues 381-414 (VLGFHRLGCMRLLRKEYREAEEAFETAFNLGHVY), 441-477 (SSVSPPLGWMYQERSFYCEGDKKLEDLEKATELDPTL), 511-544 (LECLEIRFCLYLGMDDYEAALRDIQAALTLCPDY), 637-670 (HERLVYEGWILYDTGHCEEGLQKAKESIGIKRSF), and 711-744 (GQALNNLGSVYVDCEKLDLAADCYINALKVRHTR). A coiled-coil region spans residues 755 to 793 (LRNDKAAAYEEMTRLIEKAQNNASAYEKRSEYCDRELAK). TPR repeat units lie at residues 807-840 (VYPYRYRAAVLMDSRKEREAITELSRAIAFKADL) and 842-873 (LLHLRAAFHEHIGDVTSALRDCRAALSVDPNH).

This sequence belongs to the ETO1 family. As to quaternary structure, interacts with the C-terminal domain of ACS4, ACS5 and ACS9. As to expression, predominantly expressed in flowers.

It functions in the pathway protein modification; protein ubiquitination. Possible regulator of the ethylene pathway, which acts by regulating the stability of 1-aminocyclopropane-1-carboxylate synthase (ACS) enzymes. May act as a substrate-specific adapter that connects ACS enzymes, such as ACS5, to ubiquitin ligase complexes, leading to proteasomal degradation of ACS enzymes. The polypeptide is ETO1-like protein 1 (EOL1) (Arabidopsis thaliana (Mouse-ear cress)).